Reading from the N-terminus, the 484-residue chain is Protein nucleotidyltransferase YdiU (484 aa).

ATP is bound by residues Gly-81, Gly-83, Arg-84, Lys-103, Asp-115, Gly-116, Arg-166, and Arg-173. Asp-244 functions as the Proton acceptor in the catalytic mechanism. Mg(2+) is bound by residues Asn-245 and Asp-254. An ATP-binding site is contributed by Asp-254.

Belongs to the SELO family. Mg(2+) is required as a cofactor. The cofactor is Mn(2+).

It carries out the reaction L-seryl-[protein] + ATP = 3-O-(5'-adenylyl)-L-seryl-[protein] + diphosphate. The catalysed reaction is L-threonyl-[protein] + ATP = 3-O-(5'-adenylyl)-L-threonyl-[protein] + diphosphate. It catalyses the reaction L-tyrosyl-[protein] + ATP = O-(5'-adenylyl)-L-tyrosyl-[protein] + diphosphate. The enzyme catalyses L-histidyl-[protein] + UTP = N(tele)-(5'-uridylyl)-L-histidyl-[protein] + diphosphate. It carries out the reaction L-seryl-[protein] + UTP = O-(5'-uridylyl)-L-seryl-[protein] + diphosphate. The catalysed reaction is L-tyrosyl-[protein] + UTP = O-(5'-uridylyl)-L-tyrosyl-[protein] + diphosphate. In terms of biological role, nucleotidyltransferase involved in the post-translational modification of proteins. It can catalyze the addition of adenosine monophosphate (AMP) or uridine monophosphate (UMP) to a protein, resulting in modifications known as AMPylation and UMPylation. The sequence is that of Protein nucleotidyltransferase YdiU from Shewanella loihica (strain ATCC BAA-1088 / PV-4).